The sequence spans 207 residues: MIOREX complex component 11 (207 aa).

The N-terminal 46 residues, 1–46 (MTVMNLFFRPCQLQMGSGPLELMLKRPTQLTTFMNTRPGGSTQIRF), are a transit peptide targeting the mitochondrion. At 47 to 98 (ISGNLDPVKRREDRLRKIFSKSRLLTRLNKNPKFSHYFDRLSEAGTVPTLTS) the chain is on the mitochondrial matrix side. A helical membrane pass occupies residues 99–119 (FFILHEVTAILPLFLLWWLLY). Residues 120–177 (NLDLSDDFKLPNFLNGLMDSCHTAMEKFVGKRYQECLNKNKLILSGTVAYVTVKLLYP) lie on the Mitochondrial intermembrane side of the membrane. A helical membrane pass occupies residues 178-198 (VRIFISIWGAPYFGKWLLLPF). Residues 199 to 207 (QKLKHLIKK) lie on the Mitochondrial matrix side of the membrane.

Belongs to the MRX11 family. In terms of assembly, associates with the mitochondrial ribosome.

It is found in the mitochondrion. It localises to the mitochondrion inner membrane. Component of MIOREX complexes, large expressome-like assemblies of ribosomes with factors involved in all the steps of post-transcriptional gene expression. The sequence is that of MIOREX complex component 11 from Saccharomyces cerevisiae (strain ATCC 204508 / S288c) (Baker's yeast).